We begin with the raw amino-acid sequence, 147 residues long: UPF0460 protein in nifX-nifW intergenic region (147 aa).

Belongs to the UPF0460 family.

This Frankia alni protein is UPF0460 protein in nifX-nifW intergenic region.